Consider the following 661-residue polypeptide: Transketolase (661 aa).

Position 30 (histidine 30) interacts with substrate. Thiamine diphosphate is bound by residues histidine 70 and glycine 118–leucine 120. The tract at residues serine 99–glycine 118 is disordered. Residue aspartate 159 coordinates Mg(2+). Thiamine diphosphate contacts are provided by glycine 160 and asparagine 189. Residues asparagine 189 and valine 191 each contribute to the Mg(2+) site. Residues histidine 266, arginine 357, and serine 384 each contribute to the substrate site. Histidine 266 lines the thiamine diphosphate pocket. The active-site Proton donor is the glutamate 411. Residue phenylalanine 437 participates in thiamine diphosphate binding. Residues histidine 461, aspartate 469, and arginine 520 each contribute to the substrate site.

This sequence belongs to the transketolase family. Homodimer. Requires Mg(2+) as cofactor. Ca(2+) serves as cofactor. Mn(2+) is required as a cofactor. It depends on Co(2+) as a cofactor. The cofactor is thiamine diphosphate.

It catalyses the reaction D-sedoheptulose 7-phosphate + D-glyceraldehyde 3-phosphate = aldehydo-D-ribose 5-phosphate + D-xylulose 5-phosphate. Functionally, catalyzes the transfer of a two-carbon ketol group from a ketose donor to an aldose acceptor, via a covalent intermediate with the cofactor thiamine pyrophosphate. In Physarum polycephalum (Slime mold), this protein is Transketolase (tkt).